We begin with the raw amino-acid sequence, 622 residues long: Low affinity potassium transport system protein Kup (622 aa).

Transmembrane regions (helical) follow at residues 9–29, 49–69, 103–123, 137–157, 165–185, 213–233, 247–267, 276–296, 337–357, 363–383, 396–416, and 419–439; these read LPAITLAAIGVVYGDIGTSPL, VFGFLSLIFWLLIFVVSIKYL, VIMGLIGGSFFYGEVVITPAI, PQLDTWIVPLSIVVLTLLFMI, VGKLFAPIMLTWFLILAVLGL, VSFIALGAVVLSITGVEALYA, WFTVVLPSLVLNYFGQGALLL, PFFLLAPDWALIPLLILAALA, IYIPFVNWLLYFAVVVVIVSF, LAAAYGIAVTGTMVLTSILST, LVALILVAFLCVDIPLFSANL, and LLSGGWLPLSLGLIMFTIMTT.

It belongs to the HAK/KUP transporter (TC 2.A.72) family.

The protein resides in the cell inner membrane. The enzyme catalyses K(+)(in) + H(+)(in) = K(+)(out) + H(+)(out). Its function is as follows. Responsible for the low-affinity transport of potassium into the cell. Likely operates as a K(+):H(+) symporter. The polypeptide is Low affinity potassium transport system protein Kup (Salmonella arizonae (strain ATCC BAA-731 / CDC346-86 / RSK2980)).